A 151-amino-acid chain; its full sequence is UPF0208 membrane protein YfbV (151 aa).

The next 2 helical transmembrane spans lie at 46 to 65 and 69 to 91; these read YAIR…QIAL and LGPA…WWLG.

It belongs to the UPF0208 family.

It localises to the cell inner membrane. This is UPF0208 membrane protein YfbV from Shigella flexneri serotype 5b (strain 8401).